A 96-amino-acid chain; its full sequence is Co-chaperonin GroES (96 aa).

This sequence belongs to the GroES chaperonin family. As to quaternary structure, heptamer of 7 subunits arranged in a ring. Interacts with the chaperonin GroEL.

Its subcellular location is the cytoplasm. Functionally, together with the chaperonin GroEL, plays an essential role in assisting protein folding. The GroEL-GroES system forms a nano-cage that allows encapsulation of the non-native substrate proteins and provides a physical environment optimized to promote and accelerate protein folding. GroES binds to the apical surface of the GroEL ring, thereby capping the opening of the GroEL channel. This Nitrosospira multiformis (strain ATCC 25196 / NCIMB 11849 / C 71) protein is Co-chaperonin GroES.